Here is a 127-residue protein sequence, read N- to C-terminus: ATP synthase epsilon chain (127 aa).

The protein belongs to the ATPase epsilon chain family. F-type ATPases have 2 components, CF(1) - the catalytic core - and CF(0) - the membrane proton channel. CF(1) has five subunits: alpha(3), beta(3), gamma(1), delta(1), epsilon(1). CF(0) has three main subunits: a, b and c.

It localises to the cell inner membrane. Functionally, produces ATP from ADP in the presence of a proton gradient across the membrane. This is ATP synthase epsilon chain from Leptospira borgpetersenii serovar Hardjo-bovis (strain JB197).